The primary structure comprises 342 residues: Holliday junction branch migration complex subunit RuvB (342 aa).

Residues 1–185 are large ATPase domain (RuvB-L); it reads MTVKPLRDVT…FPIQERLEYY (185 aa). ATP-binding positions include L24, R25, G66, K69, T70, S71, 132 to 134, R175, Y185, and R222; that span reads EDY. Residue T70 participates in Mg(2+) binding. Residues 186–256 form a small ATPAse domain (RuvB-S) region; it reads GPAELKEIAV…VVDRTLRRLE (71 aa). The head domain (RuvB-H) stretch occupies residues 259–342; sequence ARGLDAMDRR…RSGGKQGSLV (84 aa). DNA is bound by residues R314 and R319.

This sequence belongs to the RuvB family. Homohexamer. Forms an RuvA(8)-RuvB(12)-Holliday junction (HJ) complex. HJ DNA is sandwiched between 2 RuvA tetramers; dsDNA enters through RuvA and exits via RuvB. An RuvB hexamer assembles on each DNA strand where it exits the tetramer. Each RuvB hexamer is contacted by two RuvA subunits (via domain III) on 2 adjacent RuvB subunits; this complex drives branch migration. In the full resolvosome a probable DNA-RuvA(4)-RuvB(12)-RuvC(2) complex forms which resolves the HJ.

It localises to the cytoplasm. It catalyses the reaction ATP + H2O = ADP + phosphate + H(+). Functionally, the RuvA-RuvB-RuvC complex processes Holliday junction (HJ) DNA during genetic recombination and DNA repair, while the RuvA-RuvB complex plays an important role in the rescue of blocked DNA replication forks via replication fork reversal (RFR). RuvA specifically binds to HJ cruciform DNA, conferring on it an open structure. The RuvB hexamer acts as an ATP-dependent pump, pulling dsDNA into and through the RuvAB complex. RuvB forms 2 homohexamers on either side of HJ DNA bound by 1 or 2 RuvA tetramers; 4 subunits per hexamer contact DNA at a time. Coordinated motions by a converter formed by DNA-disengaged RuvB subunits stimulates ATP hydrolysis and nucleotide exchange. Immobilization of the converter enables RuvB to convert the ATP-contained energy into a lever motion, pulling 2 nucleotides of DNA out of the RuvA tetramer per ATP hydrolyzed, thus driving DNA branch migration. The RuvB motors rotate together with the DNA substrate, which together with the progressing nucleotide cycle form the mechanistic basis for DNA recombination by continuous HJ branch migration. Branch migration allows RuvC to scan DNA until it finds its consensus sequence, where it cleaves and resolves cruciform DNA. This Anaeromyxobacter dehalogenans (strain 2CP-C) protein is Holliday junction branch migration complex subunit RuvB.